The primary structure comprises 39 residues: Pro-opiomelanocortin (39 aa).

Methionine 13 carries the methionine amide modification.

The protein belongs to the POMC family.

Its subcellular location is the secreted. Functionally, precursor protein for pituitary hormones that regulate stress and environmental adaptation. Its function is as follows. Stimulates the adrenal glands to release cortisol. In terms of biological role, anorexigenic peptide. Increases the pigmentation of skin by increasing melanin production in melanocytes. The polypeptide is Pro-opiomelanocortin (pomc) (Squalus acanthias (Spiny dogfish)).